Here is a 412-residue protein sequence, read N- to C-terminus: Clamp protein VP6 (412 aa).

Belongs to the reoviridae clamp protein family. Interacts with capsid proteins VP3, VP5 and VP7.

It localises to the virion. Located at the interface of the incomplete T=13 outer capsid and the pseudo T=2 inner capsid, 120 VP6 subunits clamp and stabilizes the inner capsid shell. The sequence is that of Clamp protein VP6 (S8) from Aquareovirus C (isolate Golden shiner/USA/GSRV/1977) (AQRV-C).